The chain runs to 124 residues: Large ribosomal subunit protein bL17 (124 aa).

This sequence belongs to the bacterial ribosomal protein bL17 family. As to quaternary structure, part of the 50S ribosomal subunit. Contacts protein L32.

This is Large ribosomal subunit protein bL17 from Borrelia turicatae (strain 91E135).